The primary structure comprises 211 residues: Histidine biosynthesis bifunctional protein HisIE (211 aa).

Residues 1–118 (MNVDDLTFDD…IYGASDRFGI (118 aa)) form a phosphoribosyl-AMP cyclohydrolase region. The phosphoribosyl-ATP pyrophosphohydrolase stretch occupies residues 119–211 (IATLEALIAE…LEERHRPKEE (93 aa)).

It in the N-terminal section; belongs to the PRA-CH family. In the C-terminal section; belongs to the PRA-PH family.

The protein localises to the cytoplasm. It catalyses the reaction 1-(5-phospho-beta-D-ribosyl)-ATP + H2O = 1-(5-phospho-beta-D-ribosyl)-5'-AMP + diphosphate + H(+). The enzyme catalyses 1-(5-phospho-beta-D-ribosyl)-5'-AMP + H2O = 1-(5-phospho-beta-D-ribosyl)-5-[(5-phospho-beta-D-ribosylamino)methylideneamino]imidazole-4-carboxamide. The protein operates within amino-acid biosynthesis; L-histidine biosynthesis; L-histidine from 5-phospho-alpha-D-ribose 1-diphosphate: step 2/9. Its pathway is amino-acid biosynthesis; L-histidine biosynthesis; L-histidine from 5-phospho-alpha-D-ribose 1-diphosphate: step 3/9. This is Histidine biosynthesis bifunctional protein HisIE (hisI) from Halalkalibacterium halodurans (strain ATCC BAA-125 / DSM 18197 / FERM 7344 / JCM 9153 / C-125) (Bacillus halodurans).